Reading from the N-terminus, the 375-residue chain is Protein MGF 360-5L (375 aa).

It belongs to the asfivirus MGF 360 family.

Its function is as follows. Plays a role in virus cell tropism, and may be required for efficient virus replication in macrophages. In African swine fever virus (isolate Portugal/Lis 57/1957) (ASFV), this protein is Protein MGF 360-5L.